Here is a 306-residue protein sequence, read N- to C-terminus: UDP-N-acetylenolpyruvoylglucosamine reductase (306 aa).

Residues 34–199 (RVGGPAQLLF…TSVRLRGAIA (166 aa)) form the FAD-binding PCMH-type domain. Residue Arg179 is part of the active site. Ser228 functions as the Proton donor in the catalytic mechanism. Residue Glu298 is part of the active site.

Belongs to the MurB family. It depends on FAD as a cofactor.

It localises to the cytoplasm. The enzyme catalyses UDP-N-acetyl-alpha-D-muramate + NADP(+) = UDP-N-acetyl-3-O-(1-carboxyvinyl)-alpha-D-glucosamine + NADPH + H(+). Its pathway is cell wall biogenesis; peptidoglycan biosynthesis. Functionally, cell wall formation. This Rhodopseudomonas palustris (strain BisA53) protein is UDP-N-acetylenolpyruvoylglucosamine reductase.